Consider the following 1705-residue polypeptide: MILKSFLLGNLVSLCMKIINSVVVVGLYYGFLTTFSIGPSYLFLLRAHVMEEGEEGAEKKVSATTGFITGQLIMFISIYYAPLHLALGRPHTITVLALPYLLFHFFCNSKKNFLDYGSTTRNSMRNLSIQCVFLNNLIFQLLNHFILPSSMLARLVNIFMFRCNSKMLFVTSSFVGWIIGHILFMKWVGLLLVWIRQNRSIRKYIQANKYLVLELKNSMSMAGIFSIFLLVTCVHYLGRIPSPIFSTKLNMLEKMEEEEEFDNNEEEEFDNNEEEEFDNNKTVDYMYGNQENLKFKILEKKQKDEEKNFFLFEKPILTFFFDYNRWNRPLRYIRKINKKLKGSVRKEASQYFFYTCQSDGKQRISFTYPPSLSTFGEMIARRISLSTLEKISPDELYTEWVFTNKEKKNNLNNEFINRIEALETVFLSLNILEAKTRLSNAETKNKNNCLVKMYDPFLNGMYRGRMKKLFSSSIINETSIENCTETAELNKIHDILLPYPNSPENEQKIERSEKKKRKIDSNNGLKFSLNEILTNPKREKKYIGINEIGKKPPRWSYKLINELEQYFKKRRKEQGIMQGLDHQLRTRKFKHIAFLTRSERSFKKSHFKNYNLYRKFNRDSGFISYLEEPDFRRAVIKDSMRVQRRKMVIWGPSQGNPHSPLFLEKMEDFPFPISDLMKLFFNIRDWLGKKSEFEILDQQFQIKKNNQEDVIEFWENIPYAQKSRSVLLLAQSIFRRYIKLPLLIIAKNIGRILLRQSPEWYEDFQDWNREIYLKCNYNGLQFSKTEFPKNWLIEGFQIKILYPFHLKPWHRSKLRLSDRDRKQQDDFDSCFLTVLGMETEYPFGPPRKTPSFFEPIFKDIDYKVEIRKFNFRIRRALKKIKKKEAKVFFFVKQILKELLKGKKIPLFITREIYESNETEREKDSIISNKIIHESLSQNRPKGLTNYSQTEEEMKHRIDRRNTIRNQIEIMKKNKKTVTLKKKINKKNNGEALPTIWKILKRNNIELIVKIFIEKIYIDIFLCIINMRRIALQLFMESTKKIIEKYIDNNETNKEKINKTKQNQIDFISTRTIKKAFDNLRNSKRKSNIFFELSYLSQKYVFLKLSQTQVIHFNKLRSILQYNGPSFFLKNEIKDFFGRQGIFDYEVRHKKLPNSGMNPWKNWLRGHYQYDLSQITWSRLVPQKWRNGKNQCQPSQNKDLNKWYSYEKDQLFDYKKKQNLKVYLLSNKEENFQKNYRYDRLSYKYIHSETNKKSYIYRSSLEPNKKQENSTRNKEKTVNILKNIPIKNYLGKSDIIYMEKNTDRKYLGWKLNTNIQVESNKDQIQIRDKIPNNGLFYLPIYSNSEINYKRVFFDWMGMPFDWMGMNEKFLILNRPISNPKFFLFPEFLILYHKYKEKPWFIPSNLLLFNLNINPNFSENQNIKGKHEEDEDFFNFSPSNSKQYFELKNQNNIEESLLESIEKLQILIKGDFPLQLRWTGRLNQLNQKMMNNIQIYGLLVSLINVRKISISYIQRKEMNLDIMRRRLNLTQLTKKGILIMEPARLSVKNDGQFFMYQIIGISLVHKSKHQSNQRYRNPQNVAKNHFDESIPRHKTLNRDKKNSDLLVPEKILSSRRRRELRILISFNLKNQNNVHRKKFFCKENKIKNWSQFLDESENFDRKKNELIKLKFFFWPNYRLEDLACMNRYWFDTNNGSRFSMLRIYMYP.

5 helical membrane passes run 18–38, 67–87, 127–147, 175–195, and 218–238; these read IINS…FSIG, FITG…HLAL, LSIQ…HFIL, VGWI…LVWI, and SMSM…HYLG.

Belongs to the TIC214 family. In terms of assembly, part of the Tic complex.

The protein localises to the plastid. It localises to the chloroplast inner membrane. Its function is as follows. Involved in protein precursor import into chloroplasts. May be part of an intermediate translocation complex acting as a protein-conducting channel at the inner envelope. The protein is Protein TIC 214 of Helianthus annuus (Common sunflower).